A 702-amino-acid polypeptide reads, in one-letter code: Phosphatase and actin regulator 4 (702 aa).

Disordered stretches follow at residues 1-37 (MEDPFEEADQPTTEPGMVLDSVEAGDTTPPTKRKSKF), 72-194 (RKPR…SSGG), and 222-363 (NLSV…PFPA). The stretch at 63–88 (EVLERKISMRKPREELVKRGVLLEDP) is one RPEL 1 repeat. Residues 72–84 (RKPREELVKRGVL) show a composition bias toward basic and acidic residues. The span at 106 to 120 (GHTTPIGNARSSSPV) shows a compositional bias: polar residues. 4 positions are modified to phosphoserine: S116, S118, S131, and S147. The segment covering 147–156 (STGSQPNSEA) has biased composition (polar residues). A compositionally biased stretch (pro residues) spans 163–173 (VPKPPLLPPKR). Over residues 233 to 250 (TLPAAPASTNTTATPSLT) the composition is skewed to low complexity. Phosphoserine occurs at positions 270 and 291. Over residues 301 to 318 (PSTSVPTLESAAAITTKT) the composition is skewed to polar residues. Residues S342 and S344 each carry the phosphoserine modification. Residues 342–362 (SPSPPLPTHIPPEPPRTPPFP) are compositionally biased toward pro residues. Residue T358 is modified to Phosphothreonine. S427 carries the post-translational modification Phosphoserine. T432 is modified (phosphothreonine). A phosphoserine mark is found at S443, S453, and S464. Positions 469 to 536 (IEMLKVPDDE…EEDEDESYQS (68 aa)) are disordered. Positions 484 to 497 (TCPSTFSEEMTPTS) are enriched in polar residues. The segment covering 508-518 (EEEEKESDSDS) has biased composition (acidic residues). Phosphoserine is present on residues S514, S516, S557, and S590. 2 RPEL repeats span residues 583–608 (NTLIRRLSQRPTPEELEQRNILQPKN) and 621–646 (RRLTRKLSQRPTVAELLARKILRFNE). Residues 592–615 (RPTPEELEQRNILQPKNEADRQAE) form a disordered region. The residue at position 628 (S628) is a Phosphoserine.

This sequence belongs to the phosphatase and actin regulator family. Binds PPP1CA and actin.

It localises to the cytoplasm. It is found in the cell projection. The protein localises to the lamellipodium. Functionally, regulator of protein phosphatase 1 (PP1) required for neural tube and optic fissure closure, and enteric neural crest cell (ENCCs) migration during development. Acts as an activator of PP1 by interacting with PPP1CA and preventing phosphorylation of PPP1CA at 'Thr-320'. During neural tube closure, localizes to the ventral neural tube and activates PP1, leading to down-regulate cell proliferation within cranial neural tissue and the neural retina. Also acts as a regulator of migration of enteric neural crest cells (ENCCs) by activating PP1, leading to dephosphorylation and subsequent activation of cofilin (COF1 or COF2) and repression of the integrin signaling through the RHO/ROCK pathway. The sequence is that of Phosphatase and actin regulator 4 (PHACTR4) from Homo sapiens (Human).